Reading from the N-terminus, the 72-residue chain is Conotoxin VnMKLT2-021 (72 aa).

An N-terminal signal peptide occupies residues 1–22 (MKLTCVLIVAVLFLTACQLTTA). The propeptide occupies 23-45 (ASYARSERQHPDLGSSDQNSKLT). Disulfide bonds link cysteine 48–cysteine 62, cysteine 55–cysteine 66, and cysteine 61–cysteine 71.

It belongs to the conotoxin O1 superfamily. Expressed by the venom duct.

Its subcellular location is the secreted. This is Conotoxin VnMKLT2-021 from Conus ventricosus (Mediterranean cone).